The chain runs to 443 residues: Xaa-Pro dipeptidase (443 aa).

Mn(2+)-binding residues include Asp-246, Asp-257, His-339, Glu-384, and Glu-423.

The protein belongs to the peptidase M24B family. Bacterial-type prolidase subfamily. Mn(2+) serves as cofactor.

The catalysed reaction is Xaa-L-Pro dipeptide + H2O = an L-alpha-amino acid + L-proline. In terms of biological role, splits dipeptides with a prolyl residue in the C-terminal position. This is Xaa-Pro dipeptidase from Citrobacter koseri (strain ATCC BAA-895 / CDC 4225-83 / SGSC4696).